The primary structure comprises 216 residues: Uracil phosphoribosyltransferase (216 aa).

Residues Arg-85, Arg-110, and Asp-135–Ser-143 contribute to the 5-phospho-alpha-D-ribose 1-diphosphate site. Uracil contacts are provided by residues Ile-200 and Gly-205–Ala-207. Position 206 (Asp-206) interacts with 5-phospho-alpha-D-ribose 1-diphosphate.

The protein belongs to the UPRTase family. Requires Mg(2+) as cofactor.

It carries out the reaction UMP + diphosphate = 5-phospho-alpha-D-ribose 1-diphosphate + uracil. It participates in pyrimidine metabolism; UMP biosynthesis via salvage pathway; UMP from uracil: step 1/1. Its activity is regulated as follows. Allosterically activated by GTP. In terms of biological role, catalyzes the conversion of uracil and 5-phospho-alpha-D-ribose 1-diphosphate (PRPP) to UMP and diphosphate. The sequence is that of Uracil phosphoribosyltransferase from Paraburkholderia phytofirmans (strain DSM 17436 / LMG 22146 / PsJN) (Burkholderia phytofirmans).